The following is a 503-amino-acid chain: Intracellular exo-alpha-(1-&gt;5)-L-arabinofuranosidase (503 aa).

3 residues coordinate alpha-L-arabinofuranose: E27, N72, and N172. E173 (proton donor/acceptor) is an active-site residue. Y244, E292, and Q352 together coordinate alpha-L-arabinofuranose. E292 (nucleophile) is an active-site residue.

This sequence belongs to the glycosyl hydrolase 51 family. As to quaternary structure, homohexamer; trimer of dimers.

The protein localises to the cytoplasm. It catalyses the reaction Hydrolysis of terminal non-reducing alpha-L-arabinofuranoside residues in alpha-L-arabinosides.. The protein operates within glycan metabolism; L-arabinan degradation. Its function is as follows. Involved in the degradation of arabinan and is a key enzyme in the complete degradation of the plant cell wall. Catalyzes the cleavage of terminal alpha-(1-&gt;5)-arabinofuranosyl bonds in small oligosaccharides as alpha-(1-&gt;5)-linked arabinobiose/arabinotriose, but does not display significant activity against linear non-substituted arabinan. It is also highly efficient in the cleavage of alpha-(1-&gt;3)-linked arabinoside of xylobiose and of the alpha-(1-&gt;3)-linked arabinoside decorations of polymeric wheat arabinoxylan. It exhibits very low activity against sugar beet arabinan. The chain is Intracellular exo-alpha-(1-&gt;5)-L-arabinofuranosidase from Acetivibrio thermocellus (strain ATCC 27405 / DSM 1237 / JCM 9322 / NBRC 103400 / NCIMB 10682 / NRRL B-4536 / VPI 7372) (Clostridium thermocellum).